We begin with the raw amino-acid sequence, 168 residues long: Thiol peroxidase (168 aa).

Residues proline 19 to alanine 168 form the Thioredoxin domain. The Cysteine sulfenic acid (-SOH) intermediate role is filled by cysteine 61. Cysteine 61 and cysteine 95 form a disulfide bridge.

Belongs to the peroxiredoxin family. Tpx subfamily. As to quaternary structure, homodimer.

The enzyme catalyses a hydroperoxide + [thioredoxin]-dithiol = an alcohol + [thioredoxin]-disulfide + H2O. Functionally, thiol-specific peroxidase that catalyzes the reduction of hydrogen peroxide and organic hydroperoxides to water and alcohols, respectively. Plays a role in cell protection against oxidative stress by detoxifying peroxides. In Salmonella typhimurium (strain LT2 / SGSC1412 / ATCC 700720), this protein is Thiol peroxidase.